Here is a 152-residue protein sequence, read N- to C-terminus: Transcriptional regulator MraZ (152 aa).

2 SpoVT-AbrB domains span residues 5-52 and 81-124; these read ATLV…PLPE and ASEC…DEQT.

This sequence belongs to the MraZ family. As to quaternary structure, forms oligomers.

It is found in the cytoplasm. The protein resides in the nucleoid. In terms of biological role, negatively regulates its own expression and that of the subsequent genes in the proximal part of the division and cell wall (dcw) gene cluster. Acts by binding directly to DNA. May also regulate the expression of genes outside the dcw cluster. The protein is Transcriptional regulator MraZ of Pectobacterium atrosepticum (strain SCRI 1043 / ATCC BAA-672) (Erwinia carotovora subsp. atroseptica).